A 613-amino-acid polypeptide reads, in one-letter code: Activating transcription factor 3 (613 aa).

2 disordered regions span residues 77–115 (RHFN…PSVQ) and 133–218 (KRKL…NKIA). The segment covering 85–105 (GQSHSQDSSHSSCSGSPLDSP) has biased composition (low complexity). The span at 138–147 (TCDSSSGSEQ) shows a compositional bias: polar residues. Positions 158-175 (NHNGHSGSSNNYSGSMSN) are enriched in low complexity. Residues 178–191 (DLDDDCEESSDDDS) show a composition bias toward acidic residues. One can recognise a bZIP domain in the interval 205–268 (EDRRRRRRER…QKLVDMLKSH (64 aa)). Positions 207–229 (RRRRRRERNKIAATKCRMKKRER) are basic motif. The interval 233–261 (LIKESEVLDTQNVELKNQVRQLETERQKL) is leucine-zipper. A disordered region spans residues 337–446 (PNGYCKPSPS…SSNATSSTTP (110 aa)). Residues 356 to 368 (QQQQQQQQQQQPQ) show a composition bias toward low complexity. The span at 369–389 (SLNPAGNNVIDQQHANPSPSL) shows a compositional bias: polar residues. A compositionally biased stretch (low complexity) spans 402–446 (GSASNHPSHNNNNNNNNSSGASSNTSNNNSNISSHSSNATSSTTP).

It belongs to the bZIP family. ATF subfamily. Interacts with Jra/jun; the interaction enhances the DNA-binding activity of Atf3. As to expression, moderate expression in some regions of the larval nervous system, the ring gland and imaginal disks. High expression in larval gut, excretory malpighian tubules, salivary glands, and, to a lesser extent, the fat body where levels are approximately 2.5-fold less than the gut.

It is found in the nucleus. Its function is as follows. Transcription factor which binds to the cAMP response element (CRE). Regulates metabolic and innate immune homeostasis, possibly by controlling appropriate expression of genes involved in peritrophic matrix composition and ensuring the normal digestive and immune function of the gut. Required for the expression of odorant receptors Or43b and Or47b. The chain is Activating transcription factor 3 from Drosophila melanogaster (Fruit fly).